A 509-amino-acid polypeptide reads, in one-letter code: Lanosterol 14-alpha demethylase (509 aa).

The helical transmembrane segment at glycine 30–isoleucine 50 threads the bilayer. Heme is bound at residue cysteine 455.

It belongs to the cytochrome P450 family. It depends on heme as a cofactor. Ubiquitinated by MARCHF6, leading to proteasomal degradation. As to expression, ubiquitously expressed with highest levels in testis, ovary, adrenal, prostate, liver, kidney and lung.

The protein localises to the endoplasmic reticulum membrane. Its subcellular location is the microsome membrane. The catalysed reaction is a 14alpha-methyl steroid + 3 reduced [NADPH--hemoprotein reductase] + 3 O2 = a Delta(14) steroid + formate + 3 oxidized [NADPH--hemoprotein reductase] + 4 H2O + 4 H(+). It catalyses the reaction lanosterol + 3 reduced [NADPH--hemoprotein reductase] + 3 O2 = 4,4-dimethyl-5alpha-cholesta-8,14,24-trien-3beta-ol + formate + 3 oxidized [NADPH--hemoprotein reductase] + 4 H2O + 4 H(+). It carries out the reaction 24,25-dihydrolanosterol + 3 reduced [NADPH--hemoprotein reductase] + 3 O2 = 4,4-dimethyl-8,14-cholestadien-3beta-ol + formate + 3 oxidized [NADPH--hemoprotein reductase] + 4 H2O + 4 H(+). The enzyme catalyses a 14alpha-methyl steroid + reduced [NADPH--hemoprotein reductase] + O2 = a 14alpha-hydroxymethyl steroid + oxidized [NADPH--hemoprotein reductase] + H2O + H(+). The catalysed reaction is a 14alpha-hydroxymethyl steroid + reduced [NADPH--hemoprotein reductase] + O2 = a 14alpha-formyl steroid + oxidized [NADPH--hemoprotein reductase] + 2 H2O + H(+). It catalyses the reaction a 14alpha-formyl steroid + reduced [NADPH--hemoprotein reductase] + O2 = a Delta(14) steroid + formate + oxidized [NADPH--hemoprotein reductase] + H2O + 2 H(+). It carries out the reaction lanosterol + reduced [NADPH--hemoprotein reductase] + O2 = 32-hydroxylanosterol + oxidized [NADPH--hemoprotein reductase] + H2O + H(+). The enzyme catalyses 32-hydroxylanosterol + reduced [NADPH--hemoprotein reductase] + O2 = 32-oxolanosterol + oxidized [NADPH--hemoprotein reductase] + 2 H2O + H(+). The catalysed reaction is 32-oxolanosterol + reduced [NADPH--hemoprotein reductase] + O2 = 4,4-dimethyl-5alpha-cholesta-8,14,24-trien-3beta-ol + formate + oxidized [NADPH--hemoprotein reductase] + H2O + 2 H(+). It catalyses the reaction 24,25-dihydrolanosterol + reduced [NADPH--hemoprotein reductase] + O2 = 32-hydroxy-24,25-dihydrolanosterol + oxidized [NADPH--hemoprotein reductase] + H2O + H(+). It carries out the reaction 32-hydroxy-24,25-dihydrolanosterol + reduced [NADPH--hemoprotein reductase] + O2 = 32-oxo-24,25-dihydrolanosterol + oxidized [NADPH--hemoprotein reductase] + 2 H2O + H(+). The enzyme catalyses 32-oxo-24,25-dihydrolanosterol + reduced [NADPH--hemoprotein reductase] + O2 = 4,4-dimethyl-8,14-cholestadien-3beta-ol + formate + oxidized [NADPH--hemoprotein reductase] + H2O + 2 H(+). Its pathway is steroid biosynthesis; zymosterol biosynthesis; zymosterol from lanosterol: step 1/6. With respect to regulation, inhibited by azalanstat. Inhibited by azole antifungal agents ketoconazole, itraconazole and fluconazole. In terms of biological role, sterol 14alpha-demethylase that plays a critical role in the cholesterol biosynthesis pathway, being cholesterol the major sterol component in mammalian membranes as well as a precursor for bile acid and steroid hormone synthesis. Cytochrome P450 monooxygenase that catalyzes the three-step oxidative removal of the 14alpha-methyl group (C-32) of sterols such as lanosterol (lanosta-8,24-dien-3beta-ol) and 24,25-dihydrolanosterol (DHL) in the form of formate, and converts the sterols to 4,4-dimethyl-5alpha-cholesta-8,14,24-trien-3beta-ol and 4,4-dimethyl-8,14-cholestadien-3beta-ol, respectively, which are intermediates of cholesterol biosynthesis. Can also demethylate substrates not intrinsic to mammals, such as eburicol (24-methylene-24,25-dihydrolanosterol), but at a lower rate than DHL. The sequence is that of Lanosterol 14-alpha demethylase from Homo sapiens (Human).